Here is a 674-residue protein sequence, read N- to C-terminus: Probable L-type lectin-domain containing receptor kinase II.1 (674 aa).

The first 24 residues, 1–24 (MAGVLGSVVFWLIIGIHVTFLVFA), serve as a signal peptide directing secretion. The Extracellular segment spans residues 25–301 (QEGDHFVYYD…PSPKRFPLKE (277 aa)). The legume-lectin like stretch occupies residues 28 to 274 (DHFVYYDFRN…NQYILGWSFK (247 aa)). Residues asparagine 57, asparagine 117, asparagine 133, asparagine 185, asparagine 210, and asparagine 242 are each glycosylated (N-linked (GlcNAc...) asparagine). The chain crosses the membrane as a helical span at residues 302–322 (VLGATISTIAFLTLGGIVYLY). Topologically, residues 323 to 674 (KKKKYAEVLE…EDVTVLFGGR (352 aa)) are cytoplasmic. Positions 355-633 (FRENQLLGAG…LEGNVSVPAI (279 aa)) constitute a Protein kinase domain. ATP-binding positions include 361-369 (LGAGGFGKV) and lysine 383. The active-site Proton acceptor is the aspartate 480.

The protein in the C-terminal section; belongs to the protein kinase superfamily. Ser/Thr protein kinase family. In the N-terminal section; belongs to the leguminous lectin family.

It localises to the cell membrane. It catalyses the reaction L-seryl-[protein] + ATP = O-phospho-L-seryl-[protein] + ADP + H(+). The catalysed reaction is L-threonyl-[protein] + ATP = O-phospho-L-threonyl-[protein] + ADP + H(+). This chain is Probable L-type lectin-domain containing receptor kinase II.1 (LECRK21), found in Arabidopsis thaliana (Mouse-ear cress).